The sequence spans 194 residues: Protein DROOPING LEAF (194 aa).

A C4-type zinc finger spans residues 15 to 42; sequence CTYCNTVLAVGVPCKRLMDTVTVKCGHC. A disordered region spans residues 83 to 103; it reads LVSPTSNEGSPRAPFVVKPPE.

It belongs to the YABBY family.

The protein resides in the nucleus. In terms of biological role, regulates carpel specification in flower development. Severe or intermediate mutation in DL causes complete or partial homeotic conversion of carpels into stamens without affecting the identities of other floral organs. Interacts antagonistically with class B genes and controls floral meristem determinacy. Regulates midrib formation in leaves probably by inducing cell proliferation in the central region of the leaf. The sequence is that of Protein DROOPING LEAF (DL) from Oryza sativa subsp. japonica (Rice).